We begin with the raw amino-acid sequence, 396 residues long: Probable 20S rRNA accumulation protein 4 (396 aa).

Belongs to the TSR4 family.

It localises to the cytoplasm. Its subcellular location is the nucleus. The protein localises to the nucleolus. Required for processing of the 20S pre-rRNA at site D to generate mature 18S rRNA. The chain is Probable 20S rRNA accumulation protein 4 from Schizosaccharomyces pombe (strain 972 / ATCC 24843) (Fission yeast).